A 1319-amino-acid chain; its full sequence is Uromodulin-like 1 (1319 aa).

A signal peptide spans 1–22 (MMSRTVRLVLLALACTVDLSQA). At 23–1273 (SGFTENGLSL…CTKPVLGTGY (1251 aa)) the chain is on the extracellular side. One can recognise an EMI domain in the interval 34 to 107 (SYQLCSYPVT…FEQLGLYCVL (74 aa)). Intrachain disulfides connect cysteine 38-cysteine 95, cysteine 62-cysteine 71, and cysteine 94-cysteine 105. Asparagine 90 carries an N-linked (GlcNAc...) asparagine glycan. Asparagine 110 carries N-linked (GlcNAc...) asparagine glycosylation. Residues 115–159 (FASRPGVCPTAEAEPLSPSCSLDTDCSGLQKCCSWPGGRHCVSPT) form the WAP domain. N-linked (GlcNAc...) asparagine glycosylation is found at asparagine 172, asparagine 193, and asparagine 243. The EGF-like 1; calcium-binding domain occupies 265–306 (DVNECLHSELQACSVREQCRNLEGSYQCVSSQRLNHTDEDCP). 2 disulfide bridges follow: cysteine 269/cysteine 283 and cysteine 277/cysteine 292. Residues 307–391 (PIRDFVALNV…ATLVVKTDAQ (85 aa)) enclose the Fibronectin type-III 1 domain. A glycan (N-linked (GlcNAc...) asparagine) is linked at asparagine 315. Residues 389–503 (DAQVFQVTIR…QRTFVQDWDE (115 aa)) enclose the SEA 1 domain. One can recognise an EGF-like 2; calcium-binding domain in the interval 500–545 (DWDECAHSSEHDCHPSARCINLEGSYTCQCLTARDASPSRAGRVCE). 3 cysteine pairs are disulfide-bonded: cysteine 504–cysteine 518, cysteine 512–cysteine 527, and cysteine 529–cysteine 544. Disordered stretches follow at residues 569–649 (TGIT…ITKD) and 664–703 (HSSP…PESP). A compositionally biased stretch (low complexity) spans 619–632 (TGQGQTHGTHQGTT). Positions 638–647 (TTRESQELIT) are enriched in basic and acidic residues. Residues 664–678 (HSSPTWKTPPNSTRL) are compositionally biased toward polar residues. One can recognise a Fibronectin type-III 2 domain in the interval 709 to 795 (PIGKVTVSNV…QLKVRTVAQK (87 aa)). Residues asparagine 717 and asparagine 757 are each glycosylated (N-linked (GlcNAc...) asparagine). Residues 792–904 (VAQKLAGNVR…GKTFMQDYNE (113 aa)) form the SEA 2 domain. The EGF-like 3; calcium-binding domain maps to 901–945 (DYNECDMKEDDCAPGTCRNTFGSFTCSCDEGGPDSQVEYSGRSCD). Intrachain disulfides connect cysteine 905–cysteine 917, cysteine 912–cysteine 926, and cysteine 928–cysteine 944. A disordered region spans residues 939–966 (YSGRSCDGDPSGNMTQTPGSEWSPTPAG). Polar residues predominate over residues 950 to 961 (GNMTQTPGSEWS). Residue asparagine 951 is glycosylated (N-linked (GlcNAc...) asparagine). One can recognise a ZP domain in the interval 995–1238 (SCEIETVIIT…NSCRISCNDF (244 aa)). Cysteine 1160 and cysteine 1218 form a disulfide bridge. The chain crosses the membrane as a helical span at residues 1274–1294 (IILLAAAALLVVAGATTLLIL). Residues 1295–1319 (RYQRVRQKYNLRIQTDDFSYQVFSQ) are Cytoplasmic-facing.

Its subcellular location is the cell membrane. This Mus musculus (Mouse) protein is Uromodulin-like 1 (Umodl1).